The chain runs to 198 residues: UPF0314 protein Atu8092 (198 aa).

Transmembrane regions (helical) follow at residues 14-34 (LRWF…LYAM), 64-84 (WYTP…WLLF), and 150-170 (VPVW…GWLI).

The protein belongs to the UPF0314 family.

The protein localises to the cell membrane. The protein is UPF0314 protein Atu8092 of Agrobacterium fabrum (strain C58 / ATCC 33970) (Agrobacterium tumefaciens (strain C58)).